Consider the following 232-residue polypeptide: Putative quercetin 2,3-dioxygenase PA1210 (232 aa).

A divalent metal cation contacts are provided by histidine 57, histidine 59, histidine 101, and glutamate 103.

Belongs to the pirin family. Requires a divalent metal cation as cofactor.

It carries out the reaction quercetin + O2 = 2-(3,4-dihydroxybenzoyloxy)-4,6-dihydroxybenzoate + CO. Its pathway is flavonoid metabolism; quercetin degradation. In terms of biological role, putative quercetin 2,3-dioxygenase. The polypeptide is Putative quercetin 2,3-dioxygenase PA1210 (Pseudomonas aeruginosa (strain ATCC 15692 / DSM 22644 / CIP 104116 / JCM 14847 / LMG 12228 / 1C / PRS 101 / PAO1)).